The sequence spans 438 residues: UDP-N-acetylmuramate--L-alanine ligase (438 aa).

108–114 (GAHGKTS) lines the ATP pocket.

The protein belongs to the MurCDEF family.

It localises to the cytoplasm. The catalysed reaction is UDP-N-acetyl-alpha-D-muramate + L-alanine + ATP = UDP-N-acetyl-alpha-D-muramoyl-L-alanine + ADP + phosphate + H(+). It participates in cell wall biogenesis; peptidoglycan biosynthesis. Its function is as follows. Cell wall formation. The protein is UDP-N-acetylmuramate--L-alanine ligase of Oceanobacillus iheyensis (strain DSM 14371 / CIP 107618 / JCM 11309 / KCTC 3954 / HTE831).